Here is a 106-residue protein sequence, read N- to C-terminus: uncharacterized protein (106 aa).

The protein resides in the mitochondrion. This is an uncharacterized protein from Claviceps purpurea (Ergot fungus).